The primary structure comprises 177 residues: Large ribosomal subunit protein uL6 (177 aa).

Belongs to the universal ribosomal protein uL6 family. In terms of assembly, part of the 50S ribosomal subunit.

Its function is as follows. This protein binds to the 23S rRNA, and is important in its secondary structure. It is located near the subunit interface in the base of the L7/L12 stalk, and near the tRNA binding site of the peptidyltransferase center. The sequence is that of Large ribosomal subunit protein uL6 from Rhodopseudomonas palustris (strain HaA2).